The chain runs to 316 residues: DNA-directed RNA polymerase subunit alpha (316 aa).

Residues 1-232 (MSGNDLFPST…DLFNPLHHCS (232 aa)) form an alpha N-terminal domain (alpha-NTD) region. The interval 247-316 (KINDILVEEL…LNIYLPKEKY (70 aa)) is alpha C-terminal domain (alpha-CTD).

The protein belongs to the RNA polymerase alpha chain family. As to quaternary structure, in plastids the minimal PEP RNA polymerase catalytic core is composed of four subunits: alpha, beta, beta', and beta''. When a (nuclear-encoded) sigma factor is associated with the core the holoenzyme is formed, which can initiate transcription.

The protein resides in the plastid. Its subcellular location is the chloroplast. The catalysed reaction is RNA(n) + a ribonucleoside 5'-triphosphate = RNA(n+1) + diphosphate. DNA-dependent RNA polymerase catalyzes the transcription of DNA into RNA using the four ribonucleoside triphosphates as substrates. The chain is DNA-directed RNA polymerase subunit alpha from Mesostigma viride (Green alga).